The sequence spans 1750 residues: Brefeldin A-inhibited guanine nucleotide-exchange protein 3 (1750 aa).

The residue at position 2 (Ala-2) is an N-acetylalanine. Disordered regions lie at residues 44–65 (LRSP…IPGP) and 565–596 (EEGS…SSGN). Positions 47–61 (PENSSPVADSESGSS) are enriched in polar residues. Residues 565–588 (EEGSHPVENGKGDGGHGGFERSDS) show a composition bias toward basic and acidic residues. Ser-586 is modified (phosphoserine). One can recognise an SEC7 domain in the interval 601-788 (AIEQRRAYKL…RALYERISRN (188 aa)). Glu-703 is a catalytic residue. Ser-1307 carries the post-translational modification Phosphoserine.

In terms of assembly, homodimer.

Its subcellular location is the cytoplasm. It is found in the cytosol. The protein resides in the membrane. Its activity is regulated as follows. Inhibited by brefeldin A. Functionally, activates the ARF proteins by exchanging bound GDP for free GTP. Plays a role in vesicular protein sorting. Involved both in the nuclear division phase and in the nuclear fusion phase. This Arabidopsis thaliana (Mouse-ear cress) protein is Brefeldin A-inhibited guanine nucleotide-exchange protein 3 (BIG3).